The chain runs to 370 residues: MRPDCTDFRQLFLDDVPMMDMRAPVEFAKGAFPGVVNLPLMNDQERQKVGTCYKQQGQAAAIALGHQLVSGATKQARLEAWAAFAKAHPDGYLYCFRGGLRSQIVQGWLRDEAGIQYPRVKGGYKAMRTFLLETTQQAVEQCDFVLVGGLTGTGKTDVLHQLDNVLDLEGHANHRGSSFGKRATAQPAQIDFENQLAIDVLKKRARGIGQFVLEDEGRIVGSCTVPLELYQGMQHYPLVWLEDSFTNRVERILRDYVVNLSAEFKAVHGEEDGPRLFAERMLQSMANIYKRLGGERHQRLSEMLREALQEQQRSGAVDLHRGWIEGLLNEYYDPMYAYQRAAKAERIEFAGDAVEVREYLKARALRQPRK.

The Rhodanese domain maps to 12–136 (FLDDVPMMDM…MRTFLLETTQ (125 aa)). The S-selanylcysteine intermediate role is filled by Cys95.

It belongs to the SelU family. In terms of assembly, monomer.

It catalyses the reaction 5-methylaminomethyl-2-thiouridine(34) in tRNA + selenophosphate + (2E)-geranyl diphosphate + H2O + H(+) = 5-methylaminomethyl-2-selenouridine(34) in tRNA + (2E)-thiogeraniol + phosphate + diphosphate. The enzyme catalyses 5-methylaminomethyl-2-thiouridine(34) in tRNA + (2E)-geranyl diphosphate = 5-methylaminomethyl-S-(2E)-geranyl-thiouridine(34) in tRNA + diphosphate. It carries out the reaction 5-methylaminomethyl-S-(2E)-geranyl-thiouridine(34) in tRNA + selenophosphate + H(+) = 5-methylaminomethyl-2-(Se-phospho)selenouridine(34) in tRNA + (2E)-thiogeraniol. The catalysed reaction is 5-methylaminomethyl-2-(Se-phospho)selenouridine(34) in tRNA + H2O = 5-methylaminomethyl-2-selenouridine(34) in tRNA + phosphate. Involved in the post-transcriptional modification of the uridine at the wobble position (U34) of tRNA(Lys), tRNA(Glu) and tRNA(Gln). Catalyzes the conversion of 2-thiouridine (S2U-RNA) to 2-selenouridine (Se2U-RNA). Acts in a two-step process involving geranylation of 2-thiouridine (S2U) to S-geranyl-2-thiouridine (geS2U) and subsequent selenation of the latter derivative to 2-selenouridine (Se2U) in the tRNA chain. This is tRNA 2-selenouridine synthase from Pseudomonas putida (strain ATCC 47054 / DSM 6125 / CFBP 8728 / NCIMB 11950 / KT2440).